The chain runs to 374 residues: Protein A6 homolog (374 aa).

This sequence belongs to the chordopoxvirinae A6 family.

It is found in the virion. Its function is as follows. Plays an essential role in immature virion (IV) to mature virion (MV) transition. The sequence is that of Protein A6 homolog from Vertebrata (FPV).